We begin with the raw amino-acid sequence, 76 residues long: Putative protein StbC (76 aa).

The polypeptide is Putative protein StbC (stbC) (Escherichia coli).